A 201-amino-acid chain; its full sequence is Large ribosomal subunit protein uL4 (201 aa).

The disordered stretch occupies residues 45 to 71 (AQKTRAEVTGSGKKPWRQKGTGRARAG).

This sequence belongs to the universal ribosomal protein uL4 family. As to quaternary structure, part of the 50S ribosomal subunit.

One of the primary rRNA binding proteins, this protein initially binds near the 5'-end of the 23S rRNA. It is important during the early stages of 50S assembly. It makes multiple contacts with different domains of the 23S rRNA in the assembled 50S subunit and ribosome. Its function is as follows. Forms part of the polypeptide exit tunnel. The polypeptide is Large ribosomal subunit protein uL4 (Shewanella loihica (strain ATCC BAA-1088 / PV-4)).